Reading from the N-terminus, the 320-residue chain is Malate dehydrogenase (320 aa).

Residues 10–15 (GAGNIG) and aspartate 34 each bind NAD(+). Residues arginine 83 and arginine 89 each contribute to the substrate site. Residues asparagine 96 and 119 to 121 (ITN) contribute to the NAD(+) site. Substrate is bound by residues asparagine 121 and arginine 152. Histidine 176 (proton acceptor) is an active-site residue.

This sequence belongs to the LDH/MDH superfamily. MDH type 3 family.

The enzyme catalyses (S)-malate + NAD(+) = oxaloacetate + NADH + H(+). Functionally, catalyzes the reversible oxidation of malate to oxaloacetate. The chain is Malate dehydrogenase from Rhizorhabdus wittichii (strain DSM 6014 / CCUG 31198 / JCM 15750 / NBRC 105917 / EY 4224 / RW1) (Sphingomonas wittichii).